A 283-amino-acid chain; its full sequence is Bifunctional protein FolD 2 (283 aa).

NADP(+) contacts are provided by residues 165 to 167 (GAS), Ser-190, and Ile-231.

This sequence belongs to the tetrahydrofolate dehydrogenase/cyclohydrolase family. In terms of assembly, homodimer.

The catalysed reaction is (6R)-5,10-methylene-5,6,7,8-tetrahydrofolate + NADP(+) = (6R)-5,10-methenyltetrahydrofolate + NADPH. It carries out the reaction (6R)-5,10-methenyltetrahydrofolate + H2O = (6R)-10-formyltetrahydrofolate + H(+). Its pathway is one-carbon metabolism; tetrahydrofolate interconversion. Catalyzes the oxidation of 5,10-methylenetetrahydrofolate to 5,10-methenyltetrahydrofolate and then the hydrolysis of 5,10-methenyltetrahydrofolate to 10-formyltetrahydrofolate. The sequence is that of Bifunctional protein FolD 2 from Bordetella pertussis (strain Tohama I / ATCC BAA-589 / NCTC 13251).